The following is a 135-amino-acid chain: UPF0102 protein Aave_0630 (135 aa).

Positions 1–21 (MGILEKKTAGPGGAARKTTTR) are disordered.

Belongs to the UPF0102 family.

The chain is UPF0102 protein Aave_0630 from Paracidovorax citrulli (strain AAC00-1) (Acidovorax citrulli).